The primary structure comprises 290 residues: Glycine--tRNA ligase alpha subunit (290 aa).

Belongs to the class-II aminoacyl-tRNA synthetase family. Tetramer of two alpha and two beta subunits.

Its subcellular location is the cytoplasm. It carries out the reaction tRNA(Gly) + glycine + ATP = glycyl-tRNA(Gly) + AMP + diphosphate. The polypeptide is Glycine--tRNA ligase alpha subunit (Syntrophotalea carbinolica (strain DSM 2380 / NBRC 103641 / GraBd1) (Pelobacter carbinolicus)).